The chain runs to 1317 residues: ABC transporter C family member 14 (1317 aa).

The region spanning 119–404 is the ABC transmembrane type-1 1 domain; sequence NKYALISNIF…LPEDIYKAIG (286 aa). Transmembrane regions (helical) follow at residues 127 to 147, 156 to 176, 249 to 269, 341 to 361, and 375 to 395; these read IFITIFIFLSPICLKFLINYI, SILKGILLCCLLCISILGQSI, ILILLGLLCYVVGPSGLVGFG, VLFWIFDHMMIETNATLVLVS, and LDVTFTAMTIFANLKLPLIYL. The disordered stretch occupies residues 426–451; sequence ENNQNINFNNNNNNNNNNKNNNNNDD. Residues 427-449 show a composition bias toward low complexity; the sequence is NNQNINFNNNNNNNNNNKNNNNN. Residues 490-710 enclose the ABC transporter 1 domain; sequence ENEENIKINE…ISDKNDPNLI (221 aa). 522-529 contacts ATP; the sequence is GVVGSGKT. A run of 5 helical transmembrane segments spans residues 734–754, 778–798, 871–891, 969–989, and 992–1012; these read YFSYGTSGVTLFITISLFFIG, DSFYIGYYLLIIGIFVSLLMI, LISIVFIIPIIIIPLTLLFII, LEVMGCIMVFFTSLAAALFTS, and GLAALSVTTALSLNGYLSWGV. The 284-residue stretch at 744–1027 folds into the ABC transmembrane type-1 2 domain; the sequence is LFITISLFFI…LEVKMNSFQR (284 aa). Residues 1071 to 1306 enclose the ABC transporter 2 domain; that stretch reads IEFKNVEIKY…PNSKFNKLIK (236 aa). 1105 to 1112 lines the ATP pocket; it reads GRTGAGKT.

It belongs to the ABC transporter superfamily. ABCC family. Conjugate transporter (TC 3.A.1.208) subfamily.

The protein localises to the membrane. The chain is ABC transporter C family member 14 (abcC14) from Dictyostelium discoideum (Social amoeba).